A 167-amino-acid chain; its full sequence is UPF0114 protein in repA1-repA2 intergenic region (167 aa).

The next 3 helical transmembrane spans lie at 15–35 (LMFPVYVGLSFGFILLTLKFF), 53–73 (LVLVVLSLIDIALVGGLLVMV), and 136–156 (IMLCVIIHLTFVLSAFGMAYI).

Belongs to the UPF0114 family.

The protein resides in the cell membrane. This Buchnera aphidicola subsp. Diuraphis noxia protein is UPF0114 protein in repA1-repA2 intergenic region.